The following is a 398-amino-acid chain: 2-amino-3-ketobutyrate coenzyme A ligase (398 aa).

111–112 (CF) is a binding site for pyridoxal 5'-phosphate. His-136 is a binding site for substrate. Pyridoxal 5'-phosphate contacts are provided by residues Ser-185, 210–213 (DDSH), 241–244 (TLGK), and 274–275 (SN). The residue at position 244 (Lys-244) is an N6-(pyridoxal phosphate)lysine. Residue Arg-368 participates in substrate binding.

This sequence belongs to the class-II pyridoxal-phosphate-dependent aminotransferase family. As to quaternary structure, homodimer. Pyridoxal 5'-phosphate is required as a cofactor.

The catalysed reaction is glycine + acetyl-CoA = (2S)-2-amino-3-oxobutanoate + CoA. It functions in the pathway amino-acid degradation; L-threonine degradation via oxydo-reductase pathway; glycine from L-threonine: step 2/2. Its function is as follows. Catalyzes the cleavage of 2-amino-3-ketobutyrate to glycine and acetyl-CoA. The polypeptide is 2-amino-3-ketobutyrate coenzyme A ligase (Salmonella typhimurium (strain LT2 / SGSC1412 / ATCC 700720)).